The chain runs to 239 residues: MEAEVQQGQQSPEGQLEKRPPSPPWAGIPLQRGLGHRVRQHVNPLQAQYQQPAPPPHWERVYRRLGQPFHLDIGTGSGRFLLRIAQEQPDWNFLGVEIRQALVERANAWRDELGLDNVHFLFANINVSLRHLFAPGDLSRVTILFPDPWFKKRHHKRRIVQPQLVADLALLLRPGSPVFLQSDIQEVAEEMAARFLEHPQFWDPHQGPLDSNPLGIPTEREWQCLQLDLPIYRYWLERR.

Polar residues predominate over residues 1-13; sequence MEAEVQQGQQSPE. Positions 1–30 are disordered; the sequence is MEAEVQQGQQSPEGQLEKRPPSPPWAGIPL. S-adenosyl-L-methionine contacts are provided by Asp72, Glu97, Asn124, and Asp147. Residue Asp147 is part of the active site. Lys151 and Asp183 together coordinate substrate.

The protein belongs to the class I-like SAM-binding methyltransferase superfamily. TrmB family.

It catalyses the reaction guanosine(46) in tRNA + S-adenosyl-L-methionine = N(7)-methylguanosine(46) in tRNA + S-adenosyl-L-homocysteine. The protein operates within tRNA modification; N(7)-methylguanine-tRNA biosynthesis. Its function is as follows. Catalyzes the formation of N(7)-methylguanine at position 46 (m7G46) in tRNA. The chain is tRNA (guanine-N(7)-)-methyltransferase from Synechococcus sp. (strain JA-2-3B'a(2-13)) (Cyanobacteria bacterium Yellowstone B-Prime).